Reading from the N-terminus, the 127-residue chain is Biogenesis of lysosome-related organelles complex 1 subunit BLS1 (127 aa).

The disordered stretch occupies residues 103 to 127 (KNSHNTNHGGCNKTKNSSKDKLLDK). Residues 105–117 (SHNTNHGGCNKTK) show a composition bias toward polar residues.

It belongs to the BLOC1S1 family. Component of the biogenesis of lysosome-related organelles complex-1 (BLOC-1).

It localises to the endosome. Component of the biogenesis of lysosome-related organelles complex-1 (BLOC-1), a complex involved in endosomal cargo sorting. This chain is Biogenesis of lysosome-related organelles complex 1 subunit BLS1 (BLS1), found in Vanderwaltozyma polyspora (strain ATCC 22028 / DSM 70294 / BCRC 21397 / CBS 2163 / NBRC 10782 / NRRL Y-8283 / UCD 57-17) (Kluyveromyces polysporus).